The chain runs to 1097 residues: Apolipoprotein B receptor (1097 aa).

Disordered stretches follow at residues 64 to 249 (QEDL…KGEE), 262 to 376 (AWGT…WTTS), 410 to 739 (EEEG…SRRG), 789 to 866 (GWDS…ARAE), and 889 to 1097 (VGWQ…PKPQ). 3 stretches are compositionally biased toward basic and acidic residues: residues 83–92 (GPGDDRRHEV), 158–177 (ERQE…RSWE), and 185–208 (VRAR…ETEG). Residues 209–218 (KAGAVGPKAA) are compositionally biased toward low complexity. 2 stretches are compositionally biased toward basic and acidic residues: residues 219 to 232 (GDNR…READ) and 279 to 302 (GREE…EEAR). The segment covering 312–330 (TASGGEEAETASGGEEAGT) has biased composition (low complexity). The segment covering 331-362 (ASGGEEAGIASGGEAGTASGGEEAGTASGGEE) has biased composition (gly residues). Residue Ser-458 is modified to Phosphoserine. Composition is skewed to basic and acidic residues over residues 463 to 487 (VDLR…RMEE) and 496 to 505 (EERGSSRDPV). At Ser-510 the chain carries Phosphoserine. The residue at position 572 (Thr-572) is a Phosphothreonine. Position 594 is a phosphoserine (Ser-594). 2 stretches are compositionally biased toward basic and acidic residues: residues 594-606 (SKEE…EAGP) and 626-637 (NRTRKDMERGNT). The segment covering 640 to 652 (DAADGEQREEEET) has biased composition (acidic residues). Basic and acidic residues-rich tracts occupy residues 791 to 800 (DSKEKEEAAA), 892 to 918 (QERE…RLLD), and 928 to 950 (RRAE…EEQP). Basic residues predominate over residues 1000–1017 (SRVHLSRSSSQRRSRPSF). The span at 1041–1050 (APEQRPLQLE) shows a compositional bias: low complexity.

Homodimer. Post-translationally, there are 2 forms in macrophages, the membrane-binding proteins 200 kDa (MBP 200) and 235 kDa (MBP 235), that can be reduced into a single active ligand-binding species with intermediate mobility (MBP 200R). In terms of tissue distribution, expressed in peripheral blood leukocytes &gt; bone marrow = spleen &gt; lymph node, and only faintly visible in appendix and thymus. Expressed in the brain, heart, kidney, liver, lung, pancreas, and placenta. Expressed primarily by reticuloendothelial cells: monocytes, macrophages, and endothelial cells. Expressed in atherosclerotic lesion foam cells.

Its subcellular location is the cell membrane. Macrophage receptor that binds to the apolipoprotein B48 (APOB) of dietary triglyceride (TG)-rich lipoproteins (TRL) or to a like domain of APOB in hypertriglyceridemic very low density lipoprotein (HTG-VLDL). Binds and internalizes TRL when out of the context of the macrophage. May provide essential lipids to reticuloendothelial cells. Could also be involved in foam cell formation with elevated TRL and remnant lipoprotein (RLP). Mediates the rapid high-affinity uptake of chylomicrons (CM), HTG-VLDL, and trypsinized (tryp) VLDL devoid of APOE in vitro in macrophages. This is Apolipoprotein B receptor from Homo sapiens (Human).